Reading from the N-terminus, the 245-residue chain is tRNA (guanine-N(1)-)-methyltransferase (245 aa).

Residues G114 and 133-138 contribute to the S-adenosyl-L-methionine site; that span reads IGDYVL.

The protein belongs to the RNA methyltransferase TrmD family. As to quaternary structure, homodimer.

It localises to the cytoplasm. It carries out the reaction guanosine(37) in tRNA + S-adenosyl-L-methionine = N(1)-methylguanosine(37) in tRNA + S-adenosyl-L-homocysteine + H(+). Its function is as follows. Specifically methylates guanosine-37 in various tRNAs. In Prochlorococcus marinus (strain MIT 9312), this protein is tRNA (guanine-N(1)-)-methyltransferase.